The sequence spans 461 residues: ADP-specific phosphofructokinase (461 aa).

Residues 1–457 (MVRELLEKAR…FASYLAMLKE (457 aa)) form the ADPK domain. Residues E268, E298, and D441 each coordinate Mg(2+). D441 acts as the Proton acceptor in catalysis.

This sequence belongs to the carbohydrate kinase PfkC family. Mg(2+) serves as cofactor.

It localises to the cytoplasm. The enzyme catalyses beta-D-fructose 6-phosphate + ADP = beta-D-fructose 1,6-bisphosphate + AMP + H(+). Its pathway is carbohydrate degradation; glycolysis. Its function is as follows. Catalyzes the phosphorylation of fructose 6-phosphate to fructose 1,6-bisphosphate using ADP as the phosphate donor. The polypeptide is ADP-specific phosphofructokinase (Thermococcus zilligii).